Here is a 295-residue protein sequence, read N- to C-terminus: 4-hydroxy-tetrahydrodipicolinate synthase (295 aa).

Pyruvate is bound at residue T48. The active-site Proton donor/acceptor is Y135. The Schiff-base intermediate with substrate role is filled by K163. V204 is a pyruvate binding site.

The protein belongs to the DapA family. As to quaternary structure, homotetramer; dimer of dimers.

It is found in the cytoplasm. It catalyses the reaction L-aspartate 4-semialdehyde + pyruvate = (2S,4S)-4-hydroxy-2,3,4,5-tetrahydrodipicolinate + H2O + H(+). Its pathway is amino-acid biosynthesis; L-lysine biosynthesis via DAP pathway; (S)-tetrahydrodipicolinate from L-aspartate: step 3/4. Catalyzes the condensation of (S)-aspartate-beta-semialdehyde [(S)-ASA] and pyruvate to 4-hydroxy-tetrahydrodipicolinate (HTPA). The protein is 4-hydroxy-tetrahydrodipicolinate synthase of Francisella tularensis subsp. novicida (strain U112).